The chain runs to 255 residues: Na(+)-translocating NADH-quinone reductase subunit C (255 aa).

A helical membrane pass occupies residues 11–31 (LGVVVGLSLVCSIIVSTAAVG). Thr223 is subject to FMN phosphoryl threonine.

It belongs to the NqrC family. In terms of assembly, composed of six subunits; NqrA, NqrB, NqrC, NqrD, NqrE and NqrF. The cofactor is FMN.

Its subcellular location is the cell inner membrane. It catalyses the reaction a ubiquinone + n Na(+)(in) + NADH + H(+) = a ubiquinol + n Na(+)(out) + NAD(+). NQR complex catalyzes the reduction of ubiquinone-1 to ubiquinol by two successive reactions, coupled with the transport of Na(+) ions from the cytoplasm to the periplasm. NqrA to NqrE are probably involved in the second step, the conversion of ubisemiquinone to ubiquinol. The protein is Na(+)-translocating NADH-quinone reductase subunit C of Vibrio vulnificus (strain CMCP6).